The primary structure comprises 349 residues: Homeobox-leucine zipper protein HOX7 (349 aa).

The interval 42–186 is disordered; it reads RATRRDEQDD…PKQKSDLANR (145 aa). Polar residues-rich tracts occupy residues 89-99 and 121-135; these read SAETGSANSEM and SSPSSMQEASTRQQV. The homeobox DNA-binding region spans 150-209; that stretch reads GARKKLRLSKEQSSFLEDSFKEHSTLTPKQKSDLANRLNLRPRQVEVWFQNRRARTKLKQ. The segment covering 167-183 has biased composition (basic and acidic residues); the sequence is DSFKEHSTLTPKQKSDL. Residues 208 to 252 form a leucine-zipper region; the sequence is KQTEVDCEHLKRCCERLTRENRRLQREVAELRGALRTTTSSYPPL.

The protein belongs to the HD-ZIP homeobox family. Class II subfamily. As to quaternary structure, homodimer. May form a heterodimer with HOX1, HOX2 or HOX3. As to expression, expressed in seedlings, roots, leaves, nodes, internodes, flowers and embryo.

It is found in the nucleus. Probable transcription factor that binds to the DNA sequence 5'-CAAT[GC]ATTG-3'. This is Homeobox-leucine zipper protein HOX7 (HOX7) from Oryza sativa subsp. indica (Rice).